The chain runs to 354 residues: Cellular communication network factor 6 (354 aa).

The N-terminal stretch at 1–23 is a signal peptide; it reads MQGLLFSTLLLAGLAQFCCRVQG. In terms of domain architecture, IGFBP N-terminal spans 44-117; it reads RKQFCHWPCK…RYETGVCAYL (74 aa). Disulfide bonds link Cys48–Cys72, Cys52–Cys74, Cys54–Cys75, Cys61–Cys78, Cys86–Cys100, and Cys92–Cys114. An N-linked (GlcNAc...) asparagine glycan is attached at Asn178. Positions 208–253 constitute a TSP type-1 domain; it reads KCLVQATKWTPCSRTCGMGISNRVTNENSNCEMRKEKRLCYIQPCD. 5 disulfide bridges follow: Cys268–Cys305, Cys285–Cys319, Cys296–Cys335, Cys299–Cys337, and Cys304–Cys341. The 75-residue stretch at 268-342 folds into the CTCK domain; it reads CQPTFQLSKA…TSCVCQRNCR (75 aa). Asn308 is a glycosylation site (N-linked (GlcNAc...) asparagine).

Belongs to the CCN family. In terms of tissue distribution, predominant expression in adult kidney and testis and fetal kidney. Weaker expression found in placenta, ovary, prostate and small intestine. Also expressed in skeletally-derived cells such as synoviocytes and articular cartilage chondrocytes.

It localises to the secreted. The protein localises to the mitochondrion. Its function is as follows. Plays a role in mitochondrial electron transport and mitochondrial respiration. Through its regulation of the mitochondrial function may play a role in normal postnatal skeletal growth and cartilage homeostasis. The sequence is that of Cellular communication network factor 6 from Homo sapiens (Human).